We begin with the raw amino-acid sequence, 502 residues long: MASKKLGADFHGTFSYLDDVPFKTGDKFKTPAKVGLPIGFSLPDCLQVVREVQYDFSLEKKTIEWAEEIKKIEEAEREAECKIAEAEAKVNSKSGPEGDSKMSFSKTHSTATMPPPINPILASLQHNSILTPTRVSSSATKQKVLSPPHIKADFNLADFECEEDPFDNLELKTIDEKEELRNILVGTTGPIMAQLLDNNLPRGGSGSVLQDEEVLASLERATLDFKPLHKPNGFITLPQLGNCEKMSLSSKVSLPPIPAVSNIKSLSFPKLDSDDSNQKTAKLASTFHSTSCLRNGTFQNSLKPSTQSSASELNGHHTLGLSALNLDSGTEMPALTSSQMPSLSVLSVCTEESSPPNTGPTVTPPNFSVSQVPNMPSCPQAYSELQMLSPSERQCVETVVNMGYSYECVLRAMKKKGENIEQILDYLFAHGQLCEKGFDPLLVEEALEMHQCSEEKMMEFLQLMSKFKEMGFELKDIKEVLLLHNNDQDNALEDLMARAGAS.

The tract at residues 1 to 95 (MASKKLGADF…AEAKVNSKSG (95 aa)) is interaction with ESCRT-I. In terms of domain architecture, UMA spans 17-63 (LDDVPFKTGDKFKTPAKVGLPIGFSLPDCLQVVREVQYDFSLEKKTI). Residues 86-100 (AEAKVNSKSGPEGDS) show a composition bias toward basic and acidic residues. The segment at 86 to 117 (AEAKVNSKSGPEGDSKMSFSKTHSTATMPPPI) is disordered. Residues 102–112 (MSFSKTHSTAT) are compositionally biased toward polar residues. Phosphoserine is present on residues serine 146, serine 205, and serine 289. An interaction with PTPN23 region spans residues 260 to 290 (VSNIKSLSFPKLDSDDSNQKTAKLASTFHST). UBA domains are found at residues 389–430 (SPSE…LFAH) and 451–498 (QCSE…LMAR).

As to quaternary structure, component of an ESCRT-I complex (endosomal sorting complex required for transport I) which consists of TSG101, VPS28, VPS37A and UBAP1 in a 1:1:1:1 stoichiometry. Interacts with PTPN23. Interacts (via UBA domains) with ubiquitinated proteins. In terms of tissue distribution, ubiquitous. Highly expressed in heart, brain, placenta, lung, liver, skeletal muscle and pancreas.

The protein localises to the cytoplasm. It localises to the cytosol. It is found in the endosome. Functionally, component of the ESCRT-I complex, a regulator of vesicular trafficking process. Binds to ubiquitinated cargo proteins and is required for the sorting of endocytic ubiquitinated cargos into multivesicular bodies (MVBs). Plays a role in the proteasomal degradation of ubiquitinated cell-surface proteins, such as EGFR and BST2. The protein is Ubiquitin-associated protein 1 of Homo sapiens (Human).